A 308-amino-acid chain; its full sequence is Olfactory receptor 2D2 (308 aa).

Topologically, residues 1 to 25 (MRQINQTQVTEFLLLGLSDGPHTEQ) are extracellular. A glycan (N-linked (GlcNAc...) asparagine) is linked at N5. Residues 26–49 (LLFIVLLGVYLVTVLGNLLLISLV) form a helical membrane-spanning segment. Over 50–57 (HVDSQLHT) the chain is Cytoplasmic. A helical membrane pass occupies residues 58-79 (PMYFFLCNLSLADLCFSTNIVP). The Extracellular portion of the chain corresponds to 80–100 (QALVHLLSRKKVIAFTLCAAR). The helical transmembrane segment at 101–120 (LLFFLIFGCTQCALLAVMSY) threads the bilayer. Over 121-139 (DRYVAICNPLRYPNIMTWK) the chain is Cytoplasmic. The chain crosses the membrane as a helical span at residues 140–158 (VCVQLATGSWTSGILVSVV). Residues 159–195 (DTTFILRLPYRGSNSIAHFFCEAPALLILASTDTHAS) are Extracellular-facing. The helical transmembrane segment at 196–219 (EMAIFLMGVVILLIPVFLILVSYG) threads the bilayer. The Cytoplasmic segment spans residues 220–236 (RIIVTVVKMKSTVGSLK). Residues 237–259 (AFSTCGSHLMVVILFYGSAIITY) traverse the membrane as a helical segment. Topologically, residues 260–270 (MTPKSSKQQEK) are extracellular. The helical transmembrane segment at 271–290 (SVSVFYAIVTPMLNPLIYSL) threads the bilayer. Topologically, residues 291–308 (RNKDVKAALRKVATRNFP) are cytoplasmic.

It belongs to the G-protein coupled receptor 1 family.

It is found in the cell membrane. Functionally, odorant receptor. The chain is Olfactory receptor 2D2 (OR2D2) from Homo sapiens (Human).